The following is a 349-amino-acid chain: Protein-glutamate methylesterase/protein-glutamine glutaminase (349 aa).

Positions 5–122 constitute a Response regulatory domain; it reads RVLCVDDSAL…REGMLAYSEL (118 aa). 4-aspartylphosphate is present on aspartate 56. Residues 152-344 enclose the CheB-type methylesterase domain; it reads LLSSEKLIAI…QRMLAQISSG (193 aa). Residues serine 164, histidine 190, and aspartate 286 contribute to the active site.

It belongs to the CheB family. In terms of processing, phosphorylated by CheA. Phosphorylation of the N-terminal regulatory domain activates the methylesterase activity.

Its subcellular location is the cytoplasm. It carries out the reaction [protein]-L-glutamate 5-O-methyl ester + H2O = L-glutamyl-[protein] + methanol + H(+). It catalyses the reaction L-glutaminyl-[protein] + H2O = L-glutamyl-[protein] + NH4(+). Involved in chemotaxis. Part of a chemotaxis signal transduction system that modulates chemotaxis in response to various stimuli. Catalyzes the demethylation of specific methylglutamate residues introduced into the chemoreceptors (methyl-accepting chemotaxis proteins or MCP) by CheR. Also mediates the irreversible deamidation of specific glutamine residues to glutamic acid. In Yersinia pseudotuberculosis serotype I (strain IP32953), this protein is Protein-glutamate methylesterase/protein-glutamine glutaminase.